A 421-amino-acid chain; its full sequence is DUF724 domain-containing protein 8 (421 aa).

Composition is skewed to polar residues over residues 149–165 (TQGSGDKTGDSVRNANE) and 199–213 (PRNQNGSGNDSTLEN). The tract at residues 149-229 (TQGSGDKTGD…NRKRKREENL (81 aa)) is disordered. The 175-residue stretch at 246–420 (VLPFEKKLRI…LEFLATASAP (175 aa)) folds into the DUF724 domain. Residues 361–397 (EKVTAEKESVKAENKRKILELQRLNEEMDKEIAQSKS) adopt a coiled-coil conformation.

In terms of tissue distribution, expressed in leaves and flowers, and at lower levels in roots, stems and siliques.

It is found in the nucleus. May be involved in the polar growth of plant cells via transportation of RNAs. This Arabidopsis thaliana (Mouse-ear cress) protein is DUF724 domain-containing protein 8.